A 376-amino-acid chain; its full sequence is Cell adhesion molecule CEACAM18 (376 aa).

The N-terminal stretch at M1 to G30 is a signal peptide. Topologically, residues Q31 to Y330 are extracellular. 3 N-linked (GlcNAc...) asparagine glycosylation sites follow: N69, N95, and N110. The Ig-like C2-type domain occupies P229–T314. C257 and C298 are disulfide-bonded. A helical membrane pass occupies residues I331 to C351. Residues R352–N376 lie on the Cytoplasmic side of the membrane.

It belongs to the immunoglobulin superfamily. CEA family. As to expression, mostly expressed in the small and large intestine and at lower levels also in other organs.

The protein resides in the membrane. The sequence is that of Cell adhesion molecule CEACAM18 from Mus musculus (Mouse).